A 303-amino-acid polypeptide reads, in one-letter code: D-alanine--D-alanine ligase (303 aa).

Residues 104–300 enclose the ATP-grasp domain; the sequence is KLLWNAVGLP…FEKLVERVLE (197 aa). ATP is bound at residue 132-187; sequence IAKLSLPVFVKPSSEGSSVGVFKVKTKEELLPAITAALEFDTIVLVEEFLTGAEYS. Residues D254, E267, and N269 each coordinate Mg(2+).

This sequence belongs to the D-alanine--D-alanine ligase family. Mg(2+) is required as a cofactor. Mn(2+) serves as cofactor.

The protein resides in the cytoplasm. It catalyses the reaction 2 D-alanine + ATP = D-alanyl-D-alanine + ADP + phosphate + H(+). Its pathway is cell wall biogenesis; peptidoglycan biosynthesis. In terms of biological role, cell wall formation. The polypeptide is D-alanine--D-alanine ligase (Haemophilus ducreyi (strain 35000HP / ATCC 700724)).